The primary structure comprises 345 residues: 3-isopropylmalate dehydrogenase (345 aa).

Gly-74 to Glu-87 contacts NAD(+). Substrate is bound by residues Arg-94, Arg-104, Arg-132, and Asp-217. Positions 217, 241, and 245 each coordinate Mg(2+). Residue Gly-274–Asn-286 participates in NAD(+) binding.

It belongs to the isocitrate and isopropylmalate dehydrogenases family. LeuB type 1 subfamily. Homodimer. It depends on Mg(2+) as a cofactor. The cofactor is Mn(2+).

It localises to the cytoplasm. It carries out the reaction (2R,3S)-3-isopropylmalate + NAD(+) = 4-methyl-2-oxopentanoate + CO2 + NADH. It participates in amino-acid biosynthesis; L-leucine biosynthesis; L-leucine from 3-methyl-2-oxobutanoate: step 3/4. Its function is as follows. Catalyzes the oxidation of 3-carboxy-2-hydroxy-4-methylpentanoate (3-isopropylmalate) to 3-carboxy-4-methyl-2-oxopentanoate. The product decarboxylates to 4-methyl-2 oxopentanoate. The protein is 3-isopropylmalate dehydrogenase (leuB) of Thermus thermophilus (strain ATCC 27634 / DSM 579 / HB8).